A 426-amino-acid chain; its full sequence is Methionine aminopeptidase 2 (426 aa).

A disordered region spans residues 1 to 72 (MTSATTTEAT…QEQTNPPTVG (72 aa)). Basic and acidic residues predominate over residues 10 to 34 (TAKDLQEKLSLKENDVVEDDGKVEE). A compositionally biased stretch (basic residues) spans 47-60 (KKKKKKKKSSKKKK). A substrate-binding site is contributed by His179. Asp199, Asp210, and His279 together coordinate a divalent metal cation. A substrate-binding site is contributed by His287. 2 residues coordinate a divalent metal cation: Glu312 and Glu407.

Belongs to the peptidase M24A family. Methionine aminopeptidase eukaryotic type 2 subfamily. The cofactor is Co(2+). Requires Zn(2+) as cofactor. Mn(2+) is required as a cofactor. Fe(2+) serves as cofactor.

It is found in the cytoplasm. It catalyses the reaction Release of N-terminal amino acids, preferentially methionine, from peptides and arylamides.. Functionally, cotranslationally removes the N-terminal methionine from nascent proteins. The N-terminal methionine is often cleaved when the second residue in the primary sequence is small and uncharged (Met-Ala-, Cys, Gly, Pro, Ser, Thr, or Val). This Schizosaccharomyces pombe (strain 972 / ATCC 24843) (Fission yeast) protein is Methionine aminopeptidase 2 (fma2).